A 737-amino-acid polypeptide reads, in one-letter code: Glycogen [starch] synthase, muscle (737 aa).

A Phosphoserine; by AMPK and PKA modification is found at S8. Phosphoserine is present on S11. A UDP-binding site is contributed by K39. Residues H205 and R211 each coordinate UDP-alpha-D-glucose. Residues H291, E292, Q294, H297, and K301 each contribute to the alpha-D-glucose 6-phosphate site. R331 lines the UDP pocket. Position 331 (R331) interacts with UDP-alpha-D-glucose. S412 carries the post-translational modification Phosphoserine. An alpha-D-glucose 6-phosphate-binding site is contributed by H501. Residues E510, W512, and G513 each coordinate UDP-alpha-D-glucose. T515 serves as a coordination point for UDP. Residues R582 and R586 each contribute to the alpha-D-glucose 6-phosphate site. The segment at Y634–N737 is disordered. S641 carries the phosphoserine; by DYRK2, GSK3-alpha, GSK3-beta and PASK modification. Phosphoserine; by GSK3-alpha and GSK3-beta is present on residues S645 and S649. S652 is subject to Phosphoserine. S653 carries the phosphoserine; by GSK3-alpha and GSK3-beta modification. The residue at position 657 (S657) is a Phosphoserine; by CK2. The span at E658 to A681 shows a compositional bias: acidic residues. A compositionally biased stretch (basic and acidic residues) spans A682–R695. Residue S698 is modified to Phosphoserine. The segment covering S698–A714 has biased composition (polar residues). T700 carries the phosphothreonine modification. Residue S710 is modified to Phosphoserine. Low complexity predominate over residues T715–N737. Residue T721 is modified to Phosphothreonine. S727 and S731 each carry phosphoserine.

The protein belongs to the glycosyltransferase 3 family. Part of the GYS1-GYG1 complex, a heterooctamer composed of a tetramer of GYS1 and 2 dimers of GYG1, where each GYS1 protomer binds to one GYG1 subunit (via GYG1 C-terminus); the GYS1 tetramer may dissociate from GYG1 dimers to continue glycogen polymerization on its own. In terms of processing, phosphorylation at Ser-8 by AMPK inactivates the enzyme activity. Primed phosphorylation at Ser-657 (site 5) by CSNK2A1 and CSNK2A2 is required for inhibitory phosphorylation at Ser-641 (site 3a), Ser-645 (site 3b), Ser-649 (site 3c) and Ser-653 (site 4) by GSK3A an GSK3B. Phosphorylated at Ser-641 by PASK, leading to inactivation; phosphorylation by PASK is inhibited by glycogen. Phosphorylated at Ser-641 by DYRK2, leading to inactivation. Dephosphorylation at Ser-641 and Ser-645 by PP1 activates the enzyme.

The enzyme catalyses [(1-&gt;4)-alpha-D-glucosyl](n) + UDP-alpha-D-glucose = [(1-&gt;4)-alpha-D-glucosyl](n+1) + UDP + H(+). Its pathway is glycan biosynthesis; glycogen biosynthesis. Its activity is regulated as follows. Allosteric activation by glucose-6-phosphate. Phosphorylation reduces the activity towards UDP-glucose. When in the non-phosphorylated state, glycogen synthase does not require glucose-6-phosphate as an allosteric activator; when phosphorylated it does. Glycogen synthase participates in the glycogen biosynthetic process along with glycogenin and glycogen branching enzyme. Extends the primer composed of a few glucose units formed by glycogenin by adding new glucose units to it. In this context, glycogen synthase transfers the glycosyl residue from UDP-Glc to the non-reducing end of alpha-1,4-glucan. The sequence is that of Glycogen [starch] synthase, muscle (GYS1) from Pongo abelii (Sumatran orangutan).